We begin with the raw amino-acid sequence, 481 residues long: Probable glycine dehydrogenase (decarboxylating) subunit 2 (481 aa).

N6-(pyridoxal phosphate)lysine is present on Lys-269.

The protein belongs to the GcvP family. C-terminal subunit subfamily. In terms of assembly, the glycine cleavage system is composed of four proteins: P, T, L and H. In this organism, the P 'protein' is a heterodimer of two subunits. It depends on pyridoxal 5'-phosphate as a cofactor.

It carries out the reaction N(6)-[(R)-lipoyl]-L-lysyl-[glycine-cleavage complex H protein] + glycine + H(+) = N(6)-[(R)-S(8)-aminomethyldihydrolipoyl]-L-lysyl-[glycine-cleavage complex H protein] + CO2. Functionally, the glycine cleavage system catalyzes the degradation of glycine. The P protein binds the alpha-amino group of glycine through its pyridoxal phosphate cofactor; CO(2) is released and the remaining methylamine moiety is then transferred to the lipoamide cofactor of the H protein. This Chlorobium chlorochromatii (strain CaD3) protein is Probable glycine dehydrogenase (decarboxylating) subunit 2.